The following is a 322-amino-acid chain: tRNA dimethylallyltransferase (322 aa).

ATP is bound at residue 21–28 (GQTAVGKT). 23 to 28 (TAVGKT) contributes to the substrate binding site. The interaction with substrate tRNA stretch occupies residues 46-49 (DSGC).

This sequence belongs to the IPP transferase family. In terms of assembly, monomer. Requires Mg(2+) as cofactor.

It carries out the reaction adenosine(37) in tRNA + dimethylallyl diphosphate = N(6)-dimethylallyladenosine(37) in tRNA + diphosphate. Functionally, catalyzes the transfer of a dimethylallyl group onto the adenine at position 37 in tRNAs that read codons beginning with uridine, leading to the formation of N6-(dimethylallyl)adenosine (i(6)A). This Wigglesworthia glossinidia brevipalpis protein is tRNA dimethylallyltransferase.